Consider the following 156-residue polypeptide: E3 ubiquitin-protein ligase RNF181 (156 aa).

An RING-type; atypical zinc finger spans residues 79 to 120; it reads CPVCLLEFEEGETVRQLPCEHLFHSACILPWLGKTNSCPLCR.

This sequence belongs to the RNF181 family.

The enzyme catalyses S-ubiquitinyl-[E2 ubiquitin-conjugating enzyme]-L-cysteine + [acceptor protein]-L-lysine = [E2 ubiquitin-conjugating enzyme]-L-cysteine + N(6)-ubiquitinyl-[acceptor protein]-L-lysine.. Its pathway is protein modification; protein ubiquitination. Functionally, E3 ubiquitin-protein ligase which accepts ubiquitin from an E2 ubiquitin-conjugating enzyme in the form of a thioester and then directly transfers the ubiquitin to targeted substrates. Catalyzes monoubiquitination of 26S proteasome subunit PSMC2/RPT1. The polypeptide is E3 ubiquitin-protein ligase RNF181 (rnf181) (Xenopus laevis (African clawed frog)).